The following is a 336-amino-acid chain: Foldase protein PrsA (336 aa).

The first 22 residues, 1–22, serve as a signal peptide directing secretion; the sequence is MKSAKKLLSVLCLGIFILTFTA. A lipid anchor (N-palmitoyl cysteine) is attached at Cys23. The S-diacylglycerol cysteine moiety is linked to residue Cys23. Residues 194-286 enclose the PpiC domain; that stretch reads PNTMNVSHIL…WGYHIIKINS (93 aa).

The protein belongs to the PrsA family.

It localises to the cell membrane. The enzyme catalyses [protein]-peptidylproline (omega=180) = [protein]-peptidylproline (omega=0). Functionally, plays a major role in protein secretion by helping the post-translocational extracellular folding of several secreted proteins. The protein is Foldase protein PrsA of Clostridium botulinum (strain Langeland / NCTC 10281 / Type F).